Reading from the N-terminus, the 378-residue chain is Protein RecA (378 aa).

79–86 contacts ATP; it reads GPESSGKT.

Belongs to the RecA family.

The protein resides in the cytoplasm. Its function is as follows. Can catalyze the hydrolysis of ATP in the presence of single-stranded DNA, the ATP-dependent uptake of single-stranded DNA by duplex DNA, and the ATP-dependent hybridization of homologous single-stranded DNAs. It interacts with LexA causing its activation and leading to its autocatalytic cleavage. The chain is Protein RecA from Streptococcus pyogenes serotype M49 (strain NZ131).